Consider the following 562-residue polypeptide: MDSPASKKPRCERFREFFKSAKFLIYVGHALSTWGDRMWNFAVAVFLVELYGNSLLLTAVYGLVVAGSVLLLGAIIGDWVDKNPRLKVAQTSLVVQNSAVILCGALLMAVFQFKQQLSSMYDGWLLTTCYIMVISIANIANLASTAMSITIQRDWVVVVAGDDRSKLADMNATVRIIDQLTNILAPMLVGQIMAFGSHFIGCGFISGWNLFSMCLEYFLLWKVYQKTPALAFKAGQKDSDDQELKHLNIQKEIGNTESPVEASQLMTESSETKKDTGCCYQMAEPIRTFKDGWVAYYNQSIFFAGMSLAFLYMTVLGFDCITTGYAYTQGLNGSVLSLLMGASAVSGICGTVAFTWIRKKCGLIRTGFIAGVTQLSCLTLCVASVFAPGSPFDLSVSPFEEVLRHLFGDSGSLRESPTFIPTTEPPIQANVTVFEEAPPVESYMSVGLLFAGVIAARVGLWSFDLTVTQLIQENVIESERGVINGVQNSMNYLLDLLHFIMVILAPNPEAFGLLVIISVSFVAMGHMMYFRFAYKSLGSRLFLFCSPEQKPDPNIPSLPNSV.

At 1 to 20 (MDSPASKKPRCERFREFFKS) the chain is on the cytoplasmic side. A helical transmembrane segment spans residues 21-50 (AKFLIYVGHALSTWGDRMWNFAVAVFLVEL). Residue aspartate 36 coordinates Fe cation. Topologically, residues 51–54 (YGNS) are extracellular. Residues 55–81 (LLLTAVYGLVVAGSVLLLGAIIGDWVD) form a helical membrane-spanning segment. Over 82-84 (KNP) the chain is Cytoplasmic. A helical transmembrane segment spans residues 85 to 115 (RLKVAQTSLVVQNSAVILCGALLMAVFQFKQ). At 116 to 123 (QLSSMYDG) the chain is on the extracellular side. The chain crosses the membrane as a helical span at residues 124–159 (WLLTTCYIMVISIANIANLASTAMSITIQRDWVVVV). Topologically, residues 160–161 (AG) are cytoplasmic. A helical membrane pass occupies residues 162-192 (DDRSKLADMNATVRIIDQLTNILAPMLVGQI). At 193–199 (MAFGSHF) the chain is on the extracellular side. The chain crosses the membrane as a helical span at residues 200–226 (IGCGFISGWNLFSMCLEYFLLWKVYQK). Residues 227 to 300 (TPALAFKAGQ…DGWVAYYNQS (74 aa)) are Cytoplasmic-facing. The helical transmembrane segment at 301–327 (IFFAGMSLAFLYMTVLGFDCITTGYAY) threads the bilayer. A Fe cation-binding site is contributed by cysteine 320. Residues 328–332 (TQGLN) are Extracellular-facing. A helical membrane pass occupies residues 333–360 (GSVLSLLMGASAVSGICGTVAFTWIRKK). Residues 361–362 (CG) lie on the Cytoplasmic side of the membrane. The helical transmembrane segment at 363–385 (LIRTGFIAGVTQLSCLTLCVASV) threads the bilayer. Over 386-444 (FAPGSPFDLSVSPFEEVLRHLFGDSGSLRESPTFIPTTEPPIQANVTVFEEAPPVESYM) the chain is Extracellular. Residues 445-474 (SVGLLFAGVIAARVGLWSFDLTVTQLIQEN) traverse the membrane as a helical segment. The Cytoplasmic portion of the chain corresponds to 475–479 (VIESE). A helical transmembrane segment spans residues 480–504 (RGVINGVQNSMNYLLDLLHFIMVIL). A Fe cation-binding site is contributed by histidine 498. The Extracellular portion of the chain corresponds to 505–507 (APN). Residues 508–533 (PEAFGLLVIISVSFVAMGHMMYFRFA) traverse the membrane as a helical segment. At 534-562 (YKSLGSRLFLFCSPEQKPDPNIPSLPNSV) the chain is on the cytoplasmic side.

This sequence belongs to the ferroportin (FP) (TC 2.A.100) family. SLC40A subfamily. In terms of tissue distribution, expressed in the yolk sac and placenta.

The protein resides in the cell membrane. The protein localises to the basolateral cell membrane. The catalysed reaction is Fe(2+)(in) = Fe(2+)(out). In terms of biological role, transports Fe(2+) from the inside of a cell to the outside of the cell, playing a key role for maintaining systemic iron homeostasis. May be involved in transfer of Fe(2+) between maternal and fetal circulation. The chain is Solute carrier family 40 member 1 (slc40a1) from Danio rerio (Zebrafish).